The chain runs to 177 residues: Large ribosomal subunit protein uL6 (177 aa).

Belongs to the universal ribosomal protein uL6 family. Part of the 50S ribosomal subunit.

In terms of biological role, this protein binds to the 23S rRNA, and is important in its secondary structure. It is located near the subunit interface in the base of the L7/L12 stalk, and near the tRNA binding site of the peptidyltransferase center. In Rickettsia conorii (strain ATCC VR-613 / Malish 7), this protein is Large ribosomal subunit protein uL6.